The sequence spans 155 residues: Endoribonuclease YbeY (155 aa).

Positions 114, 118, and 124 each coordinate Zn(2+).

This sequence belongs to the endoribonuclease YbeY family. Zn(2+) is required as a cofactor.

It localises to the cytoplasm. In terms of biological role, single strand-specific metallo-endoribonuclease involved in late-stage 70S ribosome quality control and in maturation of the 3' terminus of the 16S rRNA. In Salmonella arizonae (strain ATCC BAA-731 / CDC346-86 / RSK2980), this protein is Endoribonuclease YbeY.